Consider the following 408-residue polypeptide: Histidine--tRNA ligase (408 aa).

It belongs to the class-II aminoacyl-tRNA synthetase family. In terms of assembly, homodimer.

It localises to the cytoplasm. The enzyme catalyses tRNA(His) + L-histidine + ATP = L-histidyl-tRNA(His) + AMP + diphosphate + H(+). The polypeptide is Histidine--tRNA ligase (Campylobacter jejuni subsp. jejuni serotype O:2 (strain ATCC 700819 / NCTC 11168)).